Here is a 122-residue protein sequence, read N- to C-terminus: S-adenosylmethionine decarboxylase proenzyme (122 aa).

The Schiff-base intermediate with substrate; via pyruvic acid role is filled by Ser-63. Residue Ser-63 is modified to Pyruvic acid (Ser); by autocatalysis. His-68 (proton acceptor; for processing activity) is an active-site residue. Cys-83 acts as the Proton donor; for catalytic activity in catalysis.

The protein belongs to the prokaryotic AdoMetDC family. Type 1 subfamily. Heterotetramer of two alpha and two beta chains arranged as a dimer of alpha/beta heterodimers. Pyruvate serves as cofactor. Post-translationally, is synthesized initially as an inactive proenzyme. Formation of the active enzyme involves a self-maturation process in which the active site pyruvoyl group is generated from an internal serine residue via an autocatalytic post-translational modification. Two non-identical subunits are generated from the proenzyme in this reaction, and the pyruvate is formed at the N-terminus of the alpha chain, which is derived from the carboxyl end of the proenzyme. The post-translation cleavage follows an unusual pathway, termed non-hydrolytic serinolysis, in which the side chain hydroxyl group of the serine supplies its oxygen atom to form the C-terminus of the beta chain, while the remainder of the serine residue undergoes an oxidative deamination to produce ammonia and the pyruvoyl group blocking the N-terminus of the alpha chain.

The catalysed reaction is S-adenosyl-L-methionine + H(+) = S-adenosyl 3-(methylsulfanyl)propylamine + CO2. It participates in amine and polyamine biosynthesis; S-adenosylmethioninamine biosynthesis; S-adenosylmethioninamine from S-adenosyl-L-methionine: step 1/1. Functionally, catalyzes the decarboxylation of S-adenosylmethionine to S-adenosylmethioninamine (dcAdoMet), the propylamine donor required for the synthesis of the polyamines spermine and spermidine from the diamine putrescine. This chain is S-adenosylmethionine decarboxylase proenzyme, found in Methanococcus maripaludis (strain C7 / ATCC BAA-1331).